Here is a 411-residue protein sequence, read N- to C-terminus: Serine/threonine transporter SstT (411 aa).

A run of 8 helical transmembrane segments spans residues 17 to 37, 41 to 61, 79 to 99, 138 to 158, 189 to 209, 214 to 234, 295 to 315, and 327 to 347; these read IMVG…TASA, LGAL…LVLV, ILFL…VVSF, ALIS…GLAL, LGIF…ALWG, LVVL…LIVF, MAGA…TLGI, and VVAA…LLLI.

This sequence belongs to the dicarboxylate/amino acid:cation symporter (DAACS) (TC 2.A.23) family.

It is found in the cell inner membrane. It catalyses the reaction L-serine(in) + Na(+)(in) = L-serine(out) + Na(+)(out). It carries out the reaction L-threonine(in) + Na(+)(in) = L-threonine(out) + Na(+)(out). Functionally, involved in the import of serine and threonine into the cell, with the concomitant import of sodium (symport system). The sequence is that of Serine/threonine transporter SstT from Serratia proteamaculans (strain 568).